Consider the following 156-residue polypeptide: MEVEFSRENFLLPEMKYEYLDHTADVQIHGWGSSLKEAFEQCGVAMFGYMTELDYVSVEQCFEIEAHGDDLESLLFHFLDELLFLFSAEPYLVCKKLEITKFDVENFEISCHCYGEPFELGKHPQGTEVKAITYSAMQIIQDVEASNYEVFVIIDI.

The Ca(2+) site is built by D25, D155, and I156.

It belongs to the archease family.

Functionally, component of the tRNA-splicing ligase complex required to facilitate the enzymatic turnover of catalytic subunit RtcB. Plays an important role in a RNA repair and splicing pathway which controls axon regeneration in response to peripheral (PNS) and central nervous system (CNS) injury, by activating splicing of Xbp1 to promote axon regeneration in response to axotomy. This Drosophila melanogaster (Fruit fly) protein is Protein archease-like.